The following is a 137-amino-acid chain: Ribosomal RNA large subunit methyltransferase H (137 aa).

S-adenosyl-L-methionine-binding positions include leucine 56, glycine 85, and 104–109; that span reads LSPLTF.

This sequence belongs to the RNA methyltransferase RlmH family. Homodimer.

It localises to the cytoplasm. The enzyme catalyses pseudouridine(1915) in 23S rRNA + S-adenosyl-L-methionine = N(3)-methylpseudouridine(1915) in 23S rRNA + S-adenosyl-L-homocysteine + H(+). In terms of biological role, specifically methylates the pseudouridine at position 1915 (m3Psi1915) in 23S rRNA. This chain is Ribosomal RNA large subunit methyltransferase H, found in Prochlorococcus marinus subsp. pastoris (strain CCMP1986 / NIES-2087 / MED4).